Consider the following 167-residue polypeptide: uncharacterized protein (167 aa).

Positions proline 9–leucine 167 constitute an N-acetyltransferase domain.

The protein belongs to the acetyltransferase family.

This is an uncharacterized protein from Escherichia coli (strain K12).